A 2158-amino-acid polypeptide reads, in one-letter code: Non-reducing polyketide synthase Preu8 (2158 aa).

Residues 4–241 are N-terminal acylcarrier protein transacylase domain (SAT); sequence LVLGDQVADH…TPIPVFAPYH (238 aa). The region spanning 369–801 is the Ketosynthase family 3 (KS3) domain; the sequence is NDKIAIVGMS…GGNTAIILED (433 aa). Catalysis depends on for beta-ketoacyl synthase activity residues C541, H676, and H719. The segment at 900-1215 is malonyl-CoA:ACP transacylase (MAT) domain; it reads FTFTGQGSQY…ANSVSTLFLA (316 aa). S989 serves as the catalytic For acyl/malonyl transferase activity. The segment at 1285-1603 is product template (PT) domain; the sequence is SCQRIVREEL…RRVLNIMMPP (319 aa). Residues 1287–1423 form an N-terminal hotdog fold region; that stretch reads QRIVREELHA…GTVKYEDVSQ (137 aa). Residues 1287–1598 form the PKS/mFAS DH domain; it reads QRIVREELHA…FQNIARRVLN (312 aa). The active-site Proton acceptor; for dehydratase activity is the H1319. The C-terminal hotdog fold stretch occupies residues 1451–1598; sequence AHKVLRGMAY…FQNIARRVLN (148 aa). D1511 functions as the Proton donor; for dehydratase activity in the catalytic mechanism. The segment covering 1619–1639 has biased composition (low complexity); that stretch reads KKAASPTLAPAKAAKPAAKTS. The disordered stretch occupies residues 1619-1654; that stretch reads KKAASPTLAPAKAAKPAAKTSKPSKARAKPAADSTT. Positions 1651-1725 constitute a Carrier 1 domain; the sequence is DSTTSRVMKI…QMKKFFSQYD (75 aa). The residue at position 1685 (S1685) is an O-(pantetheine 4'-phosphoryl)serine. The interval 1723–1779 is disordered; sequence QYDGAPIPDDGDDSDGTDEPSNFSTPSYGADNASTPPSSAPSVNGKSSPENHEVLES. Residues 1731-1740 show a composition bias toward acidic residues; sequence DDGDDSDGTD. A compositionally biased stretch (polar residues) spans 1743 to 1770; that stretch reads SNFSTPSYGADNASTPPSSAPSVNGKSS. The Carrier 2 domain occupies 1779 to 1853; it reads STEVSLARKI…DIENELGMRP (75 aa). S1813 is subject to O-(pantetheine 4'-phosphoryl)serine. Positions 1847–1879 are disordered; sequence NELGMRPKPKPKAEAAPPKSSAKASPSANKQPQ. Over residues 1860-1876 the composition is skewed to low complexity; that stretch reads EAAPPKSSAKASPSANK. Residues 1894 to 2144 are thioesterase (TE) domain; that stretch reads SQYPPANSVL…NHFTMMKGDH (251 aa).

Pantetheine 4'-phosphate is required as a cofactor.

Its function is as follows. Non-reducing polyketide synthase; part of a gene cluster that mediates the biosynthesis of a yet unidentified natural product. In Preussia isomera (Coprophilous fungus), this protein is Non-reducing polyketide synthase Preu8.